The primary structure comprises 374 residues: UDP-N-acetylglucosamine--N-acetylmuramyl-(pentapeptide) pyrophosphoryl-undecaprenol N-acetylglucosamine transferase (374 aa).

UDP-N-acetyl-alpha-D-glucosamine-binding positions include 35-37 (TGG), N144, R185, S211, and Q305.

This sequence belongs to the glycosyltransferase 28 family. MurG subfamily.

It localises to the cell inner membrane. It carries out the reaction di-trans,octa-cis-undecaprenyl diphospho-N-acetyl-alpha-D-muramoyl-L-alanyl-D-glutamyl-meso-2,6-diaminopimeloyl-D-alanyl-D-alanine + UDP-N-acetyl-alpha-D-glucosamine = di-trans,octa-cis-undecaprenyl diphospho-[N-acetyl-alpha-D-glucosaminyl-(1-&gt;4)]-N-acetyl-alpha-D-muramoyl-L-alanyl-D-glutamyl-meso-2,6-diaminopimeloyl-D-alanyl-D-alanine + UDP + H(+). It functions in the pathway cell wall biogenesis; peptidoglycan biosynthesis. Functionally, cell wall formation. Catalyzes the transfer of a GlcNAc subunit on undecaprenyl-pyrophosphoryl-MurNAc-pentapeptide (lipid intermediate I) to form undecaprenyl-pyrophosphoryl-MurNAc-(pentapeptide)GlcNAc (lipid intermediate II). This is UDP-N-acetylglucosamine--N-acetylmuramyl-(pentapeptide) pyrophosphoryl-undecaprenol N-acetylglucosamine transferase from Trichodesmium erythraeum (strain IMS101).